The sequence spans 205 residues: Probable calcium-binding protein CML41 (205 aa).

Positions 26 to 55 (SFQNRRRSPKSNSSSTLNSPRSNSDDNNNI) are disordered. The segment covering 35 to 54 (KSNSSSTLNSPRSNSDDNNN) has biased composition (low complexity). 4 consecutive EF-hand domains span residues 60 to 95 (ASKE…VGEY), 96 to 131 (ISHE…RDLY), 137 to 173 (DGDG…LGES), and 174 to 205 (RTYG…MMTV). Residues D73, D75, D77, K79, E84, D109, D111, D113, S115, and D120 each coordinate Ca(2+). Ca(2+)-binding residues include D187, D189, N191, and E198.

Its function is as follows. Potential calcium sensor. The chain is Probable calcium-binding protein CML41 (CML41) from Arabidopsis thaliana (Mouse-ear cress).